Consider the following 438-residue polypeptide: Glutamine synthetase (438 aa).

In terms of domain architecture, GS beta-grasp spans 14-98; it reads EEVEYVDIRF…VHCNVVEPDT (85 aa). Residues 106–438 form the GS catalytic domain; the sequence is PRIALKAEAY…LAGDVFTKDQ (333 aa). Positions 130 and 132 each coordinate Mg(2+). D208 contributes to the ATP binding site. E213 and E220 together coordinate Mg(2+). L-glutamate contacts are provided by residues 264-265 and G265; that span reads NG. Position 269 (H269) interacts with Mg(2+). Residues 271 to 273 and S273 contribute to the ATP site; that span reads NMS. Residues R321, E327, and R339 each contribute to the L-glutamate site. ATP contacts are provided by R339, R344, and K352. E357 is a binding site for Mg(2+). R359 provides a ligand contact to L-glutamate. Position 397 is an O-AMP-tyrosine (Y397).

It belongs to the glutamine synthetase family. Oligomer of 12 subunits arranged in the form of two hexameric ring. The cofactor is Mg(2+).

The protein resides in the cytoplasm. The enzyme catalyses L-glutamate + NH4(+) + ATP = L-glutamine + ADP + phosphate + H(+). Its activity is regulated as follows. The activity of this enzyme could be controlled by adenylation under conditions of abundant glutamine. Its function is as follows. Catalyzes the ATP-dependent biosynthesis of glutamine from glutamate and ammonia. In Rhodobacter capsulatus (Rhodopseudomonas capsulata), this protein is Glutamine synthetase.